Consider the following 157-residue polypeptide: Protein-export protein SecB (157 aa).

This sequence belongs to the SecB family. Homotetramer, a dimer of dimers. One homotetramer interacts with 1 SecA dimer.

The protein localises to the cytoplasm. In terms of biological role, one of the proteins required for the normal export of preproteins out of the cell cytoplasm. It is a molecular chaperone that binds to a subset of precursor proteins, maintaining them in a translocation-competent state. It also specifically binds to its receptor SecA. In Photobacterium profundum (strain SS9), this protein is Protein-export protein SecB.